A 434-amino-acid polypeptide reads, in one-letter code: Guanosine-inosine kinase (434 aa).

Residues 40–45, 93–97, and Arg198 contribute to the GMP site; these read DQTLVD and GTIGN. ATP-binding positions include 284–289, Gly357, and Asn402; that span reads TAGPIG.

This sequence belongs to the carbohydrate kinase PfkB family. Requires Mg(2+) as cofactor.

It catalyses the reaction guanosine + ATP = GMP + ADP + H(+). The catalysed reaction is inosine + ATP = IMP + ADP + H(+). The protein operates within purine metabolism; IMP biosynthesis via salvage pathway; IMP from inosine: step 1/1. Its pathway is purine metabolism; GMP biosynthesis via salvage pathway. Functionally, catalyzes the phosphorylation of guanosine and inosine to GMP and IMP, respectively. The polypeptide is Guanosine-inosine kinase (Escherichia coli O157:H7).